The sequence spans 544 residues: Chaperonin GroEL 1 (544 aa).

Residues 29 to 32, 86 to 90, Gly413, 479 to 481, and Asp495 contribute to the ATP site; these read TLGP, DGTTT, and NAA. The tract at residues 525-544 is disordered; sequence PEPKDNAPAGAGAGGGDFDY. Residues 535–544 are compositionally biased toward gly residues; sequence AGAGGGDFDY.

It belongs to the chaperonin (HSP60) family. Forms a cylinder of 14 subunits composed of two heptameric rings stacked back-to-back. Interacts with the co-chaperonin GroES.

Its subcellular location is the cytoplasm. The catalysed reaction is ATP + H2O + a folded polypeptide = ADP + phosphate + an unfolded polypeptide.. Together with its co-chaperonin GroES, plays an essential role in assisting protein folding. The GroEL-GroES system forms a nano-cage that allows encapsulation of the non-native substrate proteins and provides a physical environment optimized to promote and accelerate protein folding. This Nostoc sp. (strain PCC 7120 / SAG 25.82 / UTEX 2576) protein is Chaperonin GroEL 1.